The following is a 546-amino-acid chain: Chaperonin GroEL (546 aa).

Residues 30–33, K51, 87–91, G415, and D496 each bind ATP; these read TLGP and DGTTT. Residues 526-546 are disordered; it reads PEDKPAPAMPGGMGGMGGMDF. A compositionally biased stretch (gly residues) spans 536 to 546; the sequence is GGMGGMGGMDF.

It belongs to the chaperonin (HSP60) family. Forms a cylinder of 14 subunits composed of two heptameric rings stacked back-to-back. Interacts with the co-chaperonin GroES.

The protein localises to the cytoplasm. It catalyses the reaction ATP + H2O + a folded polypeptide = ADP + phosphate + an unfolded polypeptide.. In terms of biological role, together with its co-chaperonin GroES, plays an essential role in assisting protein folding. The GroEL-GroES system forms a nano-cage that allows encapsulation of the non-native substrate proteins and provides a physical environment optimized to promote and accelerate protein folding. This is Chaperonin GroEL from Zymomonas mobilis subsp. mobilis (strain ATCC 31821 / ZM4 / CP4).